The chain runs to 512 residues: Reduced folate transporter (512 aa).

M1 is subject to N-acetylmethionine. Residues M1 to V29 are Cytoplasmic-facing. Residues F30–P50 traverse the membrane as a helical segment. Residues I48 and T49 each coordinate folate. Over F51–V62 the chain is Extracellular. The helical transmembrane segment at T63–T85 threads the bilayer. Residues D86–R89 are Cytoplasmic-facing. The helical transmembrane segment at Y90–L110 threads the bilayer. Residues G111 to V114 lie on the Extracellular side of the membrane. A helical transmembrane segment spans residues V115 to Y137. Folate contacts are provided by E121 and R131. The Cytoplasmic portion of the chain corresponds to I138–A151. A helical transmembrane segment spans residues S152–G176. A folate-binding site is contributed by V162. Topologically, residues H177–Y181 are extracellular. The chain crosses the membrane as a helical span at residues T182–F200. The Cytoplasmic portion of the chain corresponds to L201–Q266. A helical transmembrane segment spans residues L267–W292. 3 residues coordinate folate: Y281, Y282, and Y286. Residues R293 to S300 are Extracellular-facing. A helical membrane pass occupies residues Y301–L323. Residues S324–L329 lie on the Cytoplasmic side of the membrane. Residues W330 to F350 traverse the membrane as a helical segment. Residues Q351–R353 are Extracellular-facing. Residues D354–T377 form a helical membrane-spanning segment. Folate contacts are provided by R366 and Q370. The Cytoplasmic segment spans residues F378 to L391. Residues V392 to R415 form a helical membrane-spanning segment. Residues A400–S412 form a required for substrate-binding region. At G416–D423 the chain is on the extracellular side. A helical membrane pass occupies residues Q424–L448. Residues R449–A512 lie on the Cytoplasmic side of the membrane. Residues S467, S472, and S477 each carry the phosphoserine modification. The segment at L478–A512 is disordered.

Belongs to the reduced folate carrier (RFC) transporter (TC 2.A.48) family.

It localises to the cell membrane. It is found in the apical cell membrane. Its subcellular location is the basolateral cell membrane. The catalysed reaction is 5-amino-1-(5-phospho-beta-D-ribosyl)imidazole-4-carboxamide(in) + (6S)-5-methyl-5,6,7,8-tetrahydrofolate(out) = 5-amino-1-(5-phospho-beta-D-ribosyl)imidazole-4-carboxamide(out) + (6S)-5-methyl-5,6,7,8-tetrahydrofolate(in). Its function is as follows. Antiporter that mediates the import of reduced folates, driven by the export of organic anions. Also acts as an importer of immunoreactive cyclic dinucleotides, but with a lower transporter activity. Mechanistically, acts as a secondary active transporter, which exports intracellular organic anions down their concentration gradients to facilitate the uptake of its substrates. Has high affinity for N5-methyltetrahydrofolate, the predominant circulating form of folate. Also mediates the import of antifolate drug methotrexate. 5-amino-4-imidazolecarboxamide riboside (AICAR), when phosphorylated to AICAR monophosphate, can serve as an organic anion for antiporter activity. The sequence is that of Reduced folate transporter from Mus musculus (Mouse).